The following is a 368-amino-acid chain: Probable protein phosphatase 2C 58 (368 aa).

The PPM-type phosphatase domain maps to 23–329; sequence KFGLSSMQGW…DNMTMILVQF (307 aa). Mn(2+)-binding residues include aspartate 57, glycine 58, aspartate 272, and aspartate 320. A disordered region spans residues 336–368; sequence NKNVSPAEQSAADKQPTGDTHWSEIHVTEESSS. Basic and acidic residues predominate over residues 356 to 368; sequence HWSEIHVTEESSS.

It belongs to the PP2C family. Requires Mg(2+) as cofactor. Mn(2+) serves as cofactor.

The enzyme catalyses O-phospho-L-seryl-[protein] + H2O = L-seryl-[protein] + phosphate. The catalysed reaction is O-phospho-L-threonyl-[protein] + H2O = L-threonyl-[protein] + phosphate. The sequence is that of Probable protein phosphatase 2C 58 from Oryza sativa subsp. japonica (Rice).